Here is a 162-residue protein sequence, read N- to C-terminus: Peroxiredoxin-2D (162 aa).

The 159-residue stretch at 4–162 (ITVGDVVPDG…SSAEDILKAL (159 aa)) folds into the Thioredoxin domain. C51 functions as the Cysteine sulfenic acid (-SOH) intermediate in the catalytic mechanism.

This sequence belongs to the peroxiredoxin family. Prx5 subfamily. Monomer. Exclusively expressed in buds and flowers. Also detected in pollen.

The protein resides in the cytoplasm. It catalyses the reaction [glutaredoxin]-dithiol + a hydroperoxide = [glutaredoxin]-disulfide + an alcohol + H2O. Its function is as follows. Thiol-specific peroxidase that catalyzes the reduction of hydrogen peroxide and organic hydroperoxides to water and alcohols, respectively. Plays a role in cell protection against oxidative stress by detoxifying peroxides. May be involved in intracellular redox signaling. This is Peroxiredoxin-2D (PRXIID) from Arabidopsis thaliana (Mouse-ear cress).